The following is a 1205-amino-acid chain: MAAMGHLGDPYALRSVADLPPPFRSVFGFRYFNSLQSECFPACFLSDVNMVISAPTGSGKTVLFELCILRLLSRFLSSEWRFNLIKGTLKTIYIAPMKALVQEKLRDWNMKLGSLGISCLEMTGDNEFYNTKSIHDADLILTTPEKFDSVSRHGIRDGGLGFFSDIALVLIDEVHLLNDPRGAALEAIVSRIKMLSRLGTMKIAPLANVRFIAVSATIPNIEDIAEWLAVPSEGIKRFGEEMRPVKLTTKVFGYAPARNDFLFERRLQSFIFDILMQHSRGKSALVFCSTRKGAQEAAQCLSQTASSLGYSNPFMKSMQQYEHLKEAALTCSDKQLQACLVHGVGYHNGGLCLKDRSVVEGLFLKGDIQILCTTNTLAHGINLPAHTVVIKSTQFFNKEKGLYVEYERSMVLQMCGRAGRPPFDDTGTIIIMTRRETVHLYENLLNGCEMVESQLLPCAVEHLNAEIVQLTVSDITLAIEWLKCSYLYIRIKKNPQHYGIKKEIPRELLEKQMKDICVEKIHELGEYGLIWTDEDGFLLKPLEPGRLMTKFYLKFDTMKLIVKASACCTLEDLLHIICHSAEITWIQLRRNEKKLLNEINADKEGRLWFHVVGANGKRKKRIQTREEKIFILANDCLTGDPLVHDLSLNQEMNSICSNGCRVAKCMREYFIYKKNYKSAISSMLLAKCLHQKLWESSPFLLKQLPGIGIVTAKALKTAGIDSFESLATADARKIESVTGRNYPFGDSIKSYLPSLGPKIDINIEDAGNRQGKSTIIVTLTRLSQAVGSSKQNYADMVVGSEEDNAILFHEKIKTQEFSSPYSVKLYVPCPPNARATLKVDVIFEEYVGLDIHKKHVVSREDFHVTKVFGIKKAEPLYNLPAESCLVSSKTTRTNQSKYHNGQNPLSKEVCVIEDDFRAKAPDKDDNDLEILGTREYNNLASLEAPSFTLLHEEDYEDVPDVLASEPVEAECKSATNNTIFDHIRKKSRDFPNLMLSKSMDSSYEPLILKKMKTSGDQFGLDQSSLHAYEVTPMVFDRTEARVSPNNTDERCRNILTRTAETRSFQFTGKMDSISQKSEILNRTQGKNSTQLAGKKAFEKSKTPDENSLHFVGKRDSSSEKSKALSKTPDENSLQFLGKMDSSSEKSKFCFSSPLADFQPMQCTKQVAASVQPLTIQDYCKDILASAKSSGTGASFLDVKSVFSFL.

The region spanning 41–236 is the Helicase ATP-binding domain; that stretch reads PACFLSDVNM…WLAVPSEGIK (196 aa). 54–61 contacts ATP; that stretch reads APTGSGKT. The short motif at 172 to 175 is the DEAH box element; sequence DEVH. A Helicase C-terminal domain is found at 266–467; sequence RLQSFIFDIL…CAVEHLNAEI (202 aa). The 312-residue stretch at 541-852 folds into the SEC63 domain; sequence PLEPGRLMTK…FEEYVGLDIH (312 aa). Polar residues predominate over residues 1075-1091; the sequence is QKSEILNRTQGKNSTQL. The disordered stretch occupies residues 1075 to 1131; the sequence is QKSEILNRTQGKNSTQLAGKKAFEKSKTPDENSLHFVGKRDSSSEKSKALSKTPDEN. Over residues 1095 to 1122 the composition is skewed to basic and acidic residues; sequence KAFEKSKTPDENSLHFVGKRDSSSEKSK.

This sequence belongs to the helicase family. SKI2 subfamily. As to expression, transcribed preferentially in early stages of meiocyte development and during meiosis in young flowers.

It localises to the nucleus. Its subcellular location is the chromosome. It catalyses the reaction Couples ATP hydrolysis with the unwinding of duplex DNA by translocating in the 3'-5' direction.. It carries out the reaction ATP + H2O = ADP + phosphate + H(+). Functionally, DNA helicase required for crossover formation, complete synapsis of homologous chromosomes and bivalent formation during meiosis. Is specific to recombination events resulting in interference-sensitive crossovers (class I meiotic crossover). Works cooperatively with ZIP4 to promote crossovers. In Oryza sativa subsp. japonica (Rice), this protein is ATP-dependent DNA helicase MER3 homolog.